A 448-amino-acid polypeptide reads, in one-letter code: MRENVVVSNMERESGKPVAVVAVVTEPWFTQRYREYLQRQKLFDTQHRVEKMPDGSVALPVLGETLPEQHLQELRNRVAPGSPCMLTQLPDPVPSKRAQGCSPAQKLCLEVSRWVEGRGVKWSAELEADLPRSWQRHGNLLLLSEDCFQAKQWKNLGPELWETVALALGVQRLAKRGRVSPDGTRTPAVTLLLGDHGWVEHVDNGIRYKFDVTQCMFSFGNITEKLRVASLSCAGEVLVDLYAGIGYFTLPFLVHAGAAFVHACEWNPHAVVALRNNLEINGVADRCQIHFGDNRKLKLSNIADRVILGLIPSSEEGWPIACQVLRQDAGGILHIHQNVESFPGKNLQALGVSKVEKEHWLYPQQITTNQWKNGATRDSRGKMLSPATKPEWQRWAESAETRIATLLQQVHGKPWKTQILHIQPVKSYAPHVDHIVLDLECCPCPSVG.

Residues S218, K225, E265, and 293–294 (DN) each bind S-adenosyl-L-methionine.

It belongs to the class I-like SAM-binding methyltransferase superfamily. TRM5/TYW2 family.

It carries out the reaction 4-demethylwyosine(37) in tRNA(Phe) + S-adenosyl-L-methionine = 4-demethyl-7-[(3S)-3-amino-3-carboxypropyl]wyosine(37) in tRNA(Phe) + S-methyl-5'-thioadenosine + H(+). It functions in the pathway tRNA modification; wybutosine-tRNA(Phe) biosynthesis. Functionally, S-adenosyl-L-methionine-dependent transferase that acts as a component of the wybutosine biosynthesis pathway. Wybutosine is a hyper modified guanosine with a tricyclic base found at the 3'-position adjacent to the anticodon of eukaryotic phenylalanine tRNA. Catalyzes the transfer of the alpha-amino-alpha-carboxypropyl (acp) group from S-adenosyl-L-methionine to the C-7 position of 4-demethylwyosine (imG-14) to produce wybutosine-86. This chain is tRNA wybutosine-synthesizing protein 2 homolog (TRMT12), found in Homo sapiens (Human).